Reading from the N-terminus, the 488-residue chain is Inosine-5'-monophosphate dehydrogenase (488 aa).

CBS domains follow at residues 94 to 150 and 154 to 215; these read IVSE…SKTV and MTKK…CKDE. Residues aspartate 249, 249–251, and 299–301 each bind NAD(+); these read DSS and GIG. Residues glycine 301 and glycine 303 each contribute to the K(+) site. Residue serine 304 participates in IMP binding. Cysteine 306 lines the K(+) pocket. Cysteine 306 serves as the catalytic Thioimidate intermediate. IMP is bound by residues 339 to 341, 362 to 363, and 386 to 390; these read DGG, GS, and YRGMG. The active-site Proton acceptor is arginine 402. Glutamate 416 is an IMP binding site. The K(+) site is built by glutamate 470, serine 471, and histidine 472.

The protein belongs to the IMPDH/GMPR family. As to quaternary structure, homotetramer. K(+) is required as a cofactor.

It catalyses the reaction IMP + NAD(+) + H2O = XMP + NADH + H(+). The protein operates within purine metabolism; XMP biosynthesis via de novo pathway; XMP from IMP: step 1/1. Its activity is regulated as follows. Mycophenolic acid (MPA) is a non-competitive inhibitor that prevents formation of the closed enzyme conformation by binding to the same site as the amobile flap. In contrast, mizoribine monophosphate (MZP) is a competitive inhibitor that induces the closed conformation. MPA is a potent inhibitor of mammalian IMPDHs but a poor inhibitor of the bacterial enzymes. MZP is a more potent inhibitor of bacterial IMPDH. Its function is as follows. Catalyzes the conversion of inosine 5'-phosphate (IMP) to xanthosine 5'-phosphate (XMP), the first committed and rate-limiting step in the de novo synthesis of guanine nucleotides, and therefore plays an important role in the regulation of cell growth. The polypeptide is Inosine-5'-monophosphate dehydrogenase (Haemophilus influenzae (strain ATCC 51907 / DSM 11121 / KW20 / Rd)).